A 499-amino-acid chain; its full sequence is Glycerol kinase (499 aa).

Threonine 12 is a binding site for ADP. ATP contacts are provided by threonine 12, threonine 13, and serine 14. Threonine 12 is a sn-glycerol 3-phosphate binding site. Arginine 16 lines the ADP pocket. Sn-glycerol 3-phosphate contacts are provided by arginine 82, glutamate 83, tyrosine 134, and aspartate 243. Positions 82, 83, 134, 243, and 244 each coordinate glycerol. Threonine 265 and glycine 308 together coordinate ADP. The ATP site is built by threonine 265, glycine 308, glutamine 312, and glycine 409. The ADP site is built by glycine 409 and asparagine 413.

This sequence belongs to the FGGY kinase family. As to quaternary structure, homotetramer and homodimer (in equilibrium).

The enzyme catalyses glycerol + ATP = sn-glycerol 3-phosphate + ADP + H(+). Its pathway is polyol metabolism; glycerol degradation via glycerol kinase pathway; sn-glycerol 3-phosphate from glycerol: step 1/1. With respect to regulation, activated by phosphorylation and inhibited by fructose 1,6-bisphosphate (FBP). Functionally, key enzyme in the regulation of glycerol uptake and metabolism. Catalyzes the phosphorylation of glycerol to yield sn-glycerol 3-phosphate. The chain is Glycerol kinase from Lachnoclostridium phytofermentans (strain ATCC 700394 / DSM 18823 / ISDg) (Clostridium phytofermentans).